The following is an 877-amino-acid chain: Phosphoenolpyruvate carboxylase (877 aa).

Active-site residues include H138 and K544.

This sequence belongs to the PEPCase type 1 family. It depends on Mg(2+) as a cofactor.

The catalysed reaction is oxaloacetate + phosphate = phosphoenolpyruvate + hydrogencarbonate. Forms oxaloacetate, a four-carbon dicarboxylic acid source for the tricarboxylic acid cycle. The chain is Phosphoenolpyruvate carboxylase from Vibrio vulnificus (strain YJ016).